The chain runs to 338 residues: tRNA-specific 2-thiouridylase MnmA (338 aa).

ATP is bound by residues 6-13 (LMSGGIDS) and M32. C87 functions as the Nucleophile in the catalytic mechanism. Residues C87 and C185 are joined by a disulfide bond. Residue G111 coordinates ATP. Residues 135-137 (KDQ) are interaction with tRNA. The Cysteine persulfide intermediate role is filled by C185. Residues 288–289 (RY) form an interaction with tRNA region.

This sequence belongs to the MnmA/TRMU family.

The protein resides in the cytoplasm. It carries out the reaction S-sulfanyl-L-cysteinyl-[protein] + uridine(34) in tRNA + AH2 + ATP = 2-thiouridine(34) in tRNA + L-cysteinyl-[protein] + A + AMP + diphosphate + H(+). In terms of biological role, catalyzes the 2-thiolation of uridine at the wobble position (U34) of tRNA, leading to the formation of s(2)U34. In Syntrophomonas wolfei subsp. wolfei (strain DSM 2245B / Goettingen), this protein is tRNA-specific 2-thiouridylase MnmA.